Here is a 334-residue protein sequence, read N- to C-terminus: Dihydroorotate dehydrogenase (quinone) (334 aa).

FMN-binding positions include 59 to 63 (AGLDK) and Thr83. Lys63 provides a ligand contact to substrate. 108-112 (NRMGF) serves as a coordination point for substrate. The FMN site is built by Asn136 and Asn169. Asn169 is a binding site for substrate. Catalysis depends on Ser172, which acts as the Nucleophile. Asn174 provides a ligand contact to substrate. Residues Lys214 and Thr242 each contribute to the FMN site. 243–244 (NT) provides a ligand contact to substrate. FMN is bound by residues Gly265, Gly294, and 315-316 (YS).

This sequence belongs to the dihydroorotate dehydrogenase family. Type 2 subfamily. Monomer. FMN serves as cofactor.

It localises to the cell membrane. It catalyses the reaction (S)-dihydroorotate + a quinone = orotate + a quinol. It participates in pyrimidine metabolism; UMP biosynthesis via de novo pathway; orotate from (S)-dihydroorotate (quinone route): step 1/1. Functionally, catalyzes the conversion of dihydroorotate to orotate with quinone as electron acceptor. The polypeptide is Dihydroorotate dehydrogenase (quinone) (Acinetobacter baylyi (strain ATCC 33305 / BD413 / ADP1)).